A 247-amino-acid chain; its full sequence is Neurotrophic factor BDNF precursor form (247 aa).

An N-terminal signal peptide occupies residues 1-18 (MTILFLTMVISYFGCMKA). The propeptide occupies 19–128 (APMKEANIRG…AANMSMRVRR (110 aa)). Asparagine 121 carries N-linked (GlcNAc...) asparagine glycosylation. Intrachain disulfides connect cysteine 141–cysteine 208, cysteine 186–cysteine 237, and cysteine 196–cysteine 239.

This sequence belongs to the NGF-beta family. Monomers and homodimers. Binds to NTRK2/TRKB. Can form heterodimers with other neurotrophin family members, such as NTF3 and NTF4 (in vitro), but the physiological relevance of this is not clear. BDNF precursor form: interacts with the heterodimer formed by NGFR and SORCS2. N-glycosylated and glycosulfated, contrary to mature BDNF. In terms of processing, mature BDNF is produced by proteolytic removal of the propeptide, catalyzed by a FURIN family member. In addition, the precursor form is proteolytically cleaved within the propeptide, but this is not an obligatory intermediate for the production of mature BDNF. Can be converted into mature BDNF by plasmin (PLG). As to expression, detected in blood plasma and in saliva (at protein level). Brain. Highly expressed in hippocampus, amygdala, cerebral cortex and cerebellum. Also expressed in heart, lung, skeletal muscle, testis, prostate and placenta.

The protein localises to the secreted. Its function is as follows. Important signaling molecule that activates signaling cascades downstream of NTRK2. During development, promotes the survival and differentiation of selected neuronal populations of the peripheral and central nervous systems. Participates in axonal growth, pathfinding and in the modulation of dendritic growth and morphology. Major regulator of synaptic transmission and plasticity at adult synapses in many regions of the CNS. The versatility of BDNF is emphasized by its contribution to a range of adaptive neuronal responses including long-term potentiation (LTP), long-term depression (LTD), certain forms of short-term synaptic plasticity, as well as homeostatic regulation of intrinsic neuronal excitability. Functionally, important signaling molecule that activates signaling cascades downstream of NTRK2. Activates signaling cascades via the heterodimeric receptor formed by NGFR and SORCS2. Signaling via NGFR and SORCS2 plays a role in synaptic plasticity and long-term depression (LTD). Binding to NGFR and SORCS2 promotes neuronal apoptosis. Promotes neuronal growth cone collapse. In Homo sapiens (Human), this protein is Neurotrophic factor BDNF precursor form.